Reading from the N-terminus, the 322-residue chain is NADH-quinone oxidoreductase subunit H (322 aa).

The next 9 membrane-spanning stretches (helical) occupy residues 15-35, 50-69, 81-101, 114-134, 149-169, 186-206, 237-257, 265-285, and 302-322; these read FFKVIFILLLIVFSSAMLSIV, NRVGWMGSLQLCADMIKILF, FIFVLSPVIAFTSLLCVIPII, IGILFFLMMASLSVYAILFAG, ACVQTLSYEVFLGLSLMGVVA, IWNVFPQFFGFLTFLIAGLAV, FFIGEYISIITVSSLIVTLFF, IPGCIWFILKIIFFIFLFILI, and WKFCLPLTLFNLFLTAFLILV.

Belongs to the complex I subunit 1 family. In terms of assembly, NDH-1 is composed of 13 different subunits. Subunits NuoA, H, J, K, L, M, N constitute the membrane sector of the complex.

The protein localises to the cell membrane. The enzyme catalyses a quinone + NADH + 5 H(+)(in) = a quinol + NAD(+) + 4 H(+)(out). Its function is as follows. NDH-1 shuttles electrons from NADH, via FMN and iron-sulfur (Fe-S) centers, to quinones in the respiratory chain. The immediate electron acceptor for the enzyme in this species is believed to be ubiquinone. Couples the redox reaction to proton translocation (for every two electrons transferred, four hydrogen ions are translocated across the cytoplasmic membrane), and thus conserves the redox energy in a proton gradient. This subunit may bind ubiquinone. This chain is NADH-quinone oxidoreductase subunit H, found in Buchnera aphidicola subsp. Acyrthosiphon pisum (strain 5A).